The chain runs to 350 residues: TLC domain-containing protein fld-1 (350 aa).

The chain crosses the membrane as a helical span at residues 9-29; the sequence is TDLLGPVPTMFLWVIVSFAFF. The segment at 65 to 100 is disordered; the sequence is GQEAENTENPPENEAEAGEQVEQEPEPDSRDLSAIP. Over residues 75–90 the composition is skewed to acidic residues; that stretch reads PENEAEAGEQVEQEPE. Residues 102–279 form the TLC domain; that stretch reads NKKWRISNEC…IINGLVIASL (178 aa). Helical transmembrane passes span 111-131, 145-165, 173-193, 195-215, 229-249, and 270-292; these read CVSLFHSVISGLWAAYALLYY, VAINLVLMSAGYLFHDLVDLL, IIELLFHHVVVLSAFAVTMFF, RFLGVVVFGLLMELNSIFLHS, PSFRIIALLNMVTLFAFRLCV, and IINGLVIASLASTNTVLTYRLLA.

Ubiquitously expressed.

It is found in the cell membrane. Functionally, regulates the composition and fluidity of the plasma membrane. Inhibits the incorporation of membrane-fluidizing phospholipids containing omega-3 long-chain polyunsaturated fatty acids (LCPUFA) and thereby promotes membrane rigidity. Does not appear to have any effect on LCPUFA synthesis. This is TLC domain-containing protein fld-1 from Caenorhabditis elegans.